Reading from the N-terminus, the 250-residue chain is 2-(R)-hydroxypropyl-CoM dehydrogenase (250 aa).

NAD(+) is bound by residues 12–14, Asp-33, 60–61, and Asn-87; these read SGN and DV. Arg-152 serves as a coordination point for 2-oxopropyl-coenzyme M. Tyr-155 serves as the catalytic Proton acceptor. 188-192 is an NAD(+) binding site; it reads IETPM. A 2-oxopropyl-coenzyme M-binding site is contributed by 195–196; that stretch reads WR.

The protein belongs to the short-chain dehydrogenases/reductases (SDR) family. As to quaternary structure, homodimer in solution. Homotetramer. Component III of the aliphatic epoxide carboxylation complex together with components I, II and IV.

The enzyme catalyses (R)-2-hydroxypropyl-coenzyme M + NAD(+) = 2-oxopropyl-coenzyme M + NADH + H(+). It participates in alkene metabolism; propylene degradation. Its activity is regulated as follows. Inhibited by the arginine-specific modifiers 2,3-butanedione and phenylglyoxal. 2-(2-methyl-2-hydroxypropylthio)ethanesulfonate (M-HPC), an achiral analog of both R-HPC and S-HPC, and (2S)-2-hydroxypropyl-coenzyme M (S-HPC) are competitive inhibitors. Inhibited (at 70%) by the coenzyme M analog 2-bromoethanesulfonate (BES). Its function is as follows. Involved in aliphatic epoxide carboxylation. Catalyzes the reversible oxidation of (R)-2-hydroxypropyl-coenzyme M (R-HPC) to 2-oxopropyl-coenzyme M (2-KPC). The enzyme is highly specific for the R enantiomers. In vitro can also use achiral 2-propanol and short-chain (R)- and (S)-2-alkanols. The chain is 2-(R)-hydroxypropyl-CoM dehydrogenase from Xanthobacter autotrophicus (strain ATCC BAA-1158 / Py2).